The chain runs to 667 residues: Coiled-coil domain-containing protein 154 (667 aa).

Coiled coils occupy residues V76–G182, R215–E302, L384–L410, and L457–N521.

It is found in the early endosome. The chain is Coiled-coil domain-containing protein 154 from Homo sapiens (Human).